The primary structure comprises 162 residues: Sorting nexin-12 (162 aa).

The disordered stretch occupies residues 1–20 (MSDTAVADTRRLNSKPQDLT). S2 carries the post-translational modification N-acetylserine. The residue at position 23 (Y23) is a Phosphotyrosine. In terms of domain architecture, PX spans 28 to 152 (NFLEIDIFNP…HMFLQEEAID (125 aa)). Positions 71, 73, 96, and 119 each coordinate a 1,2-diacyl-sn-glycero-3-phospho-(1D-myo-inositol-3-phosphate). S73 carries the post-translational modification Phosphoserine.

It belongs to the sorting nexin family.

It localises to the membrane. Its function is as follows. May be involved in several stages of intracellular trafficking. This Homo sapiens (Human) protein is Sorting nexin-12 (SNX12).